Consider the following 892-residue polypeptide: Alanine--tRNA ligase (892 aa).

Zn(2+) is bound by residues H565, H569, C678, and H682. The disordered stretch occupies residues 857-876; that stretch reads GGKGGGGRPDMAQAGGPDGA.

This sequence belongs to the class-II aminoacyl-tRNA synthetase family. The cofactor is Zn(2+).

Its subcellular location is the cytoplasm. It carries out the reaction tRNA(Ala) + L-alanine + ATP = L-alanyl-tRNA(Ala) + AMP + diphosphate. Functionally, catalyzes the attachment of alanine to tRNA(Ala) in a two-step reaction: alanine is first activated by ATP to form Ala-AMP and then transferred to the acceptor end of tRNA(Ala). Also edits incorrectly charged Ser-tRNA(Ala) and Gly-tRNA(Ala) via its editing domain. The sequence is that of Alanine--tRNA ligase from Bradyrhizobium diazoefficiens (strain JCM 10833 / BCRC 13528 / IAM 13628 / NBRC 14792 / USDA 110).